The primary structure comprises 691 residues: Protein 4.2 (691 aa).

The N-myristoyl glycine moiety is linked to residue Gly2. The tract at residues 31–39 (LFVRRGQPF) is band 3 binding. Phosphoserine; by PKA is present on Ser248.

It belongs to the transglutaminase superfamily. Transglutaminase family. Component of the ankyrin-1 complex in the erythrocyte, composed of ANK1, RHCE, RHAG, SLC4A1, EPB42, GYPA, GYPB and AQP1. Interacts with SLC4A1 (via the cytoplasmic domain); this interaction is mediated by the SLC4A1 Band 3-I dimer. Interacts with ANK1 (via ANK 1-13 repeats). Interacts with AQP1 (via the C-terminal). Both cAMP-dependent kinase (CAPK) and another kinase present in the red-blood cells seem to be able to phosphorylate EPB42.

It is found in the cell membrane. The protein resides in the cytoplasm. The protein localises to the cytoskeleton. Functionally, component of the ankyrin-1 complex, a multiprotein complex involved in the stability and shape of the erythrocyte membrane. This Homo sapiens (Human) protein is Protein 4.2.